The primary structure comprises 197 residues: ATP-dependent Clp protease proteolytic subunit (197 aa).

The active-site Nucleophile is the serine 98. Residue histidine 123 is part of the active site.

This sequence belongs to the peptidase S14 family. As to quaternary structure, fourteen ClpP subunits assemble into 2 heptameric rings which stack back to back to give a disk-like structure with a central cavity, resembling the structure of eukaryotic proteasomes.

The protein resides in the cytoplasm. The catalysed reaction is Hydrolysis of proteins to small peptides in the presence of ATP and magnesium. alpha-casein is the usual test substrate. In the absence of ATP, only oligopeptides shorter than five residues are hydrolyzed (such as succinyl-Leu-Tyr-|-NHMec, and Leu-Tyr-Leu-|-Tyr-Trp, in which cleavage of the -Tyr-|-Leu- and -Tyr-|-Trp bonds also occurs).. In terms of biological role, cleaves peptides in various proteins in a process that requires ATP hydrolysis. Has a chymotrypsin-like activity. Plays a major role in the degradation of misfolded proteins. The sequence is that of ATP-dependent Clp protease proteolytic subunit from Limosilactobacillus reuteri (strain DSM 20016) (Lactobacillus reuteri).